A 388-amino-acid chain; its full sequence is Succinate--CoA ligase [ADP-forming] subunit beta (388 aa).

In terms of domain architecture, ATP-grasp spans 9–244 (KDLLVSYDIA…PSQENVRDVL (236 aa)). ATP-binding positions include K46, 53–55 (GRG), V102, and E107. The Mg(2+) site is built by N199 and D213. Residues N264 and 321-323 (GIM) contribute to the substrate site.

Belongs to the succinate/malate CoA ligase beta subunit family. In terms of assembly, heterotetramer of two alpha and two beta subunits. Mg(2+) serves as cofactor.

The catalysed reaction is succinate + ATP + CoA = succinyl-CoA + ADP + phosphate. It carries out the reaction GTP + succinate + CoA = succinyl-CoA + GDP + phosphate. Its pathway is carbohydrate metabolism; tricarboxylic acid cycle; succinate from succinyl-CoA (ligase route): step 1/1. Functionally, succinyl-CoA synthetase functions in the citric acid cycle (TCA), coupling the hydrolysis of succinyl-CoA to the synthesis of either ATP or GTP and thus represents the only step of substrate-level phosphorylation in the TCA. The beta subunit provides nucleotide specificity of the enzyme and binds the substrate succinate, while the binding sites for coenzyme A and phosphate are found in the alpha subunit. The protein is Succinate--CoA ligase [ADP-forming] subunit beta of Chlamydia caviae (strain ATCC VR-813 / DSM 19441 / 03DC25 / GPIC) (Chlamydophila caviae).